The sequence spans 119 residues: Protein Wnt-4 (119 aa).

A lipid anchor (O-palmitoleoyl serine; by PORCN) is attached at S1. Cystine bridges form between C69–C100 and C85–C95. An N-linked (GlcNAc...) asparagine glycan is attached at N86.

Belongs to the Wnt family. In terms of processing, palmitoleoylation is required for efficient binding to frizzled receptors. Depalmitoleoylation leads to Wnt signaling pathway inhibition.

Its subcellular location is the secreted. The protein resides in the extracellular space. It is found in the extracellular matrix. Its function is as follows. Ligand for members of the frizzled family of seven transmembrane receptors. Plays an important role in embryonic development. The protein is Protein Wnt-4 (WNT-4) of Plethodon jordani (Red-cheeked salamander).